The chain runs to 392 residues: MALQPAAGARDLNPQQVELNQKLSQRLAEVYRLWGYDEVSPPRVERLETLKAGGAIASQDIVRLVADEPLGLRPEMTASIARAACTRLRQRPRPLRLWAAGTIFESRTADEGSLCIEENLQSGVELFGVEPINAEMELLSLLFSAVETLELSKQHQPRLLVGHTALMDLIMLPFQNDLREKIRTALIHYDRLALENLQLPNDQFERLLHHLECRGEPLDVLERLSGLFGTQQALNNLQRLFEQMGPLAADQGIDLQLDPTFQPHFELYTGLVFQLVCQSDAAPVVIARGGRYDNLVARCGAKGLQAAGVGFSFAIDDIRELLTKEIKASEAVESTLVAYGDQATLEHALKRQRHWHKQGQRAVVELEACHDREEAFSRLADRGCSTLDWLDH.

The protein belongs to the class-II aminoacyl-tRNA synthetase family. HisZ subfamily. In terms of assembly, heteromultimer composed of HisG and HisZ subunits.

The protein resides in the cytoplasm. Its pathway is amino-acid biosynthesis; L-histidine biosynthesis; L-histidine from 5-phospho-alpha-D-ribose 1-diphosphate: step 1/9. Functionally, required for the first step of histidine biosynthesis. May allow the feedback regulation of ATP phosphoribosyltransferase activity by histidine. The chain is ATP phosphoribosyltransferase regulatory subunit from Prochlorococcus marinus (strain MIT 9303).